A 227-amino-acid polypeptide reads, in one-letter code: uncharacterized protein (227 aa).

Transmembrane regions (helical) follow at residues 113 to 133 (IMLILMILSMILIIPLFFIVF) and 141 to 161 (FGICLTLLFYIAIFILTNGLI).

The protein localises to the membrane. This is an uncharacterized protein from Dictyostelium discoideum (Social amoeba).